Here is a 51-residue protein sequence, read N- to C-terminus: Large ribosomal subunit protein eL39 (51 aa).

It belongs to the eukaryotic ribosomal protein eL39 family. Component of the large ribosomal subunit. Interacts with IMPACT.

The protein resides in the cytoplasm. Functionally, RNA-binding component of the large ribosomal subunit. The ribosome is a large ribonucleoprotein complex responsible for the synthesis of proteins in the cell. The chain is Large ribosomal subunit protein eL39 (Rpl39) from Mus musculus (Mouse).